We begin with the raw amino-acid sequence, 420 residues long: uncharacterized protein (420 aa).

The VWFA domain occupies 43-215; the sequence is NLCLVLDHSG…HTFRQLFQRM (173 aa). The interval 389 to 420 is disordered; the sequence is LQSGEDLSEGDRKKTRMVSKTTLQPPSAPSEH.

This is an uncharacterized protein from Synechocystis sp. (strain ATCC 27184 / PCC 6803 / Kazusa).